Reading from the N-terminus, the 147-residue chain is MKVILREDIENLGKSGELVTVKDGFGRNFLLPRKKAVLASEQNLRQLEHEKAVIAARNAKLKGAAEEQAKKIGAIKVSIKRRVGDQDKLFGSVTALDIAEAVAAEGQSIDRRHIHLPEPIKALGNYEVELRLHRDVIAKIKLEVLPE.

The protein belongs to the bacterial ribosomal protein bL9 family.

Functionally, binds to the 23S rRNA. This Myxococcus xanthus (strain DK1622) protein is Large ribosomal subunit protein bL9.